The sequence spans 349 residues: tRNA pseudouridine synthase D (349 aa).

F27 is a substrate binding site. D80 (nucleophile) is an active-site residue. Substrate is bound at residue N129. Positions 155 to 303 (GVPNYFGAQR…VEAARRAMLL (149 aa)) constitute a TRUD domain. A substrate-binding site is contributed by F329.

The protein belongs to the pseudouridine synthase TruD family.

The catalysed reaction is uridine(13) in tRNA = pseudouridine(13) in tRNA. Its function is as follows. Responsible for synthesis of pseudouridine from uracil-13 in transfer RNAs. In Escherichia coli (strain SMS-3-5 / SECEC), this protein is tRNA pseudouridine synthase D.